The sequence spans 507 residues: MATKDPAVTTPDDSQLEAGRGNTGNNAGDALEKPSSSTGTMVDEPADPNVVDWDGPDDPEHPLNWSKTQKNLHLVIVSLFTLAANLAATMFAPGAEELATEFSITNSTVTAMTVSLYVLGFALGPLLLAPLSELYGRLIVYYGCNFVYIAFTIGCAFSTNVAMFLVFRIICGCAASGPMSIGGGTVADLFPQEERGKAMALFTVGPLLGPVIGPIIGGFVSENVGWRWTFRIILIFSGLIGVATVIFMRETNYTVLLQRKAQRARKETGNDKLVPKLTRNETPKQMLVRAIVRPLKLLIFSPIVLLVSLYTGILFGLIFLLFTTFPSVFQDVYGFSPGTAGLAYLGLGIGMILGLVLFSVLSDKMLKQKSGAARPEDRLILMKWLGPVTPLGLFIYGWTAKYAVHWIVPIIGTFVVGFGSLFVVIPGQIYLVDSFGAEAAASAMAANLLVRSPFGAFLDLTASPLYESLGLGWGNSVLGFICLLFTPVPWFFYTYGERMRTHFKVDL.

Residues 1-65 (MATKDPAVTT…PDDPEHPLNW (65 aa)) form a disordered region. Residue Asn64 is glycosylated (N-linked (GlcNAc...) asparagine). The chain crosses the membrane as a helical span at residues 72–92 (LHLVIVSLFTLAANLAATMFA). A glycan (N-linked (GlcNAc...) asparagine) is linked at Asn106. A run of 5 helical transmembrane segments spans residues 111–131 (AMTVSLYVLGFALGPLLLAPL), 146–166 (FVYIAFTIGCAFSTNVAMFLV), 169–189 (IICGCAASGPMSIGGGTVADL), 200–220 (ALFTVGPLLGPVIGPIIGGFV), and 228–248 (WTFRIILIFSGLIGVATVIFM). Asn252 carries N-linked (GlcNAc...) asparagine glycosylation. 6 helical membrane-spanning segments follow: residues 302 to 322 (PIVLLVSLYTGILFGLIFLLF), 341 to 361 (GLAYLGLGIGMILGLVLFSVL), 379 to 399 (LILMKWLGPVTPLGLFIYGWT), 406 to 426 (WIVPIIGTFVVGFGSLFVVIP), 429 to 449 (IYLVDSFGAEAAASAMAANLL), and 472 to 492 (GWGNSVLGFICLLFTPVPWFF).

Belongs to the major facilitator superfamily.

The protein resides in the cell membrane. Its function is as follows. Efflux pump that might be required for efficient secretion of fusarisetin A or other secondary metabolies produced by the fusarisetin A gene cluster. The chain is MFS transporter fsa7 from Fusarium sp. (strain FN080326).